The following is an 89-amino-acid chain: UPF0298 protein GTNG_0961 (89 aa).

It belongs to the UPF0298 family.

It is found in the cytoplasm. In Geobacillus thermodenitrificans (strain NG80-2), this protein is UPF0298 protein GTNG_0961.